The sequence spans 506 residues: Protein EFFECTOR OF TRANSCRIPTION 1 (506 aa).

Positions 185–225 (AFQGLYELSHDHGRKDDVLVANLGQPESIRSRLRSYSRSFA) constitute a GIY-YIG domain. A compositionally biased stretch (polar residues) spans 234 to 247 (LSQTILPTTQNKSD). Residues 234-298 (LSQTILPTTQ…VSEKHDDIVD (65 aa)) are disordered. Over residues 248–272 (NQTEEKKSDSEEEREVSSDAAEKES) the composition is skewed to basic and acidic residues. Positions 273-288 (NSLPSILRLSRSRPQP) are enriched in low complexity. Cx9Cx9RCx2HK repeat units lie at residues 306–331 (CGVL…TEHK) and 361–386 (CGVI…EDHK). The segment covering 404-413 (KAVNEDKSKP) has biased composition (basic and acidic residues). Residues 404–426 (KAVNEDKSKPETSTGMNQEGSGL) are disordered. Positions 414 to 423 (ETSTGMNQEG) are enriched in polar residues. 2 Cx9Cx9RCx2HK repeats span residues 428 to 453 (CEAT…WQHK) and 475 to 500 (CGFK…EEHK).

In terms of tissue distribution, expressed in rosette leaves, stipules, stems, flowers, siliques and mature seeds. Expressed in the vascular bundles of xylem in shoot parenchyma cells. Expressed in the remnant cytoplasm of differentiated fiber cells and in protoxylem element of parenchymal cells.

Its subcellular location is the cytoplasm. It is found in the nucleus. Transcriptional regulator involved in the regulation of cell differentiation in meristems. Binds DNA without sequence preference. This Arabidopsis thaliana (Mouse-ear cress) protein is Protein EFFECTOR OF TRANSCRIPTION 1.